A 419-amino-acid polypeptide reads, in one-letter code: 2-amino-3-ketobutyrate coenzyme A ligase, mitochondrial (419 aa).

Residues 1 to 21 (MWAGRVLHAALSRAPRESRAQ) constitute a mitochondrion transit peptide. An N6-acetyllysine; alternate modification is found at lysine 45. Lysine 45 carries the N6-succinyllysine; alternate modification. 134-135 (CF) contributes to the pyridoxal 5'-phosphate binding site. Position 159 (histidine 159) interacts with substrate. Lysine 187 is subject to N6-acetyllysine; alternate. Lysine 187 carries the post-translational modification N6-succinyllysine; alternate. Residues serine 206, 231–234 (DESH), 262–265 (TLGK), and 295–296 (SN) contribute to the pyridoxal 5'-phosphate site. Residue lysine 265 is modified to N6-(pyridoxal phosphate)lysine. N6-succinyllysine is present on residues lysine 326 and lysine 368. N6-acetyllysine; alternate is present on lysine 383. N6-succinyllysine; alternate is present on lysine 383. A substrate-binding site is contributed by arginine 389.

This sequence belongs to the class-II pyridoxal-phosphate-dependent aminotransferase family. The cofactor is pyridoxal 5'-phosphate.

The protein resides in the mitochondrion. The protein localises to the nucleus. It catalyses the reaction glycine + acetyl-CoA = (2S)-2-amino-3-oxobutanoate + CoA. It participates in amino-acid degradation; L-threonine degradation via oxydo-reductase pathway; glycine from L-threonine: step 2/2. In terms of biological role, pyridoxal phosphate (PLP) dependent enzyme, which catalyzes the cleavage of 2-amino-3-oxobutanoate to glycine and acetyl-CoA. Catalyzes the second reaction step on the main metabolic degradation pathway for L-threonine. The sequence is that of 2-amino-3-ketobutyrate coenzyme A ligase, mitochondrial (GCAT) from Bos taurus (Bovine).